The chain runs to 422 residues: Protein king tubby 2 (422 aa).

Positions P49–D169 are disordered. Residues S57–P81 show a composition bias toward low complexity.

It belongs to the TUB family.

Its subcellular location is the cytoplasm. The protein localises to the nucleus. This chain is Protein king tubby 2 (king-tubby2), found in Culex quinquefasciatus (Southern house mosquito).